The following is a 419-amino-acid chain: Monooxygenase CTB7 (419 aa).

The protein belongs to the aromatic-ring hydroxylase family. KMO subfamily.

The protein operates within mycotoxin biosynthesis. In terms of biological role, monooxygenase; part of the gene cluster that mediates the biosynthesis of cercosporin, a light-activated, non-host-selective toxin. The perylenequinone chromophore of cercosporin absorbs light energy to attain an electronically-activated triplet state and produces active oxygen species such as the hydroxyl radical, superoxide, hydrogen peroxide or singlet oxygen upon reaction with oxygen molecules. These reactive oxygen species cause damage to various cellular components including lipids, proteins and nucleic acids. The first step of cercosporin biosynthesis is performed by the polyketide synthase CTB1 which catalyzes the formation of nor-toralactone. The starter unit acyltransferase (SAT) domain of CTB1 initiates polyketide extension by the selective utilization of acetyl-CoA, which is elongated to the heptaketide in the beta-ketoacyl synthase (KS) domain by successive condensations with six malonyl units introduced by the malonyl acyltransferase (MAT) domain. The product template (PT) domain catalyzes C4-C9 and C2-C11 aldol cyclizations and dehydrations to a trihydroxynaphthalene, which is thought to be delivered to the thioesterase (TE) domain for product release. The bifunctional enzyme CTB3 then methylates nor-toralactone to toralactone before conducting an unusual oxidative aromatic ring opening. The O-methyltransferase CTB2 further methylates the nascent OH-6 of the CBT3 product, blocking further oxidation at this site before the reductase CTB6 reduces the 2-oxopropyl ketone at position C7, giving naphthalene. The FAD-dependent monooxygenase CTB5 in concert with the multicopper oxidase CTB12 are responsible for homodimerization of naphthalene with CTB7 installing the dioxepine moiety, finally producing cercosporin. The fasciclin domain-containing protein CTB11 might act with CTB5 and CTB12 whereas the roles of CTB9 and CTB10 have still to be elucidated. In Cercospora beticola (Sugarbeet leaf spot fungus), this protein is Monooxygenase CTB7.